The primary structure comprises 154 residues: Methylglyoxal synthase (154 aa).

The MGS-like domain occupies 6-154; it reads QSLPAKKNIA…KYLATRQIDI (149 aa). Residues histidine 19, lysine 23, 45–48, and 65–66 each bind substrate; these read TGTT and SG. Aspartate 71 acts as the Proton donor/acceptor in catalysis. A substrate-binding site is contributed by histidine 98.

It belongs to the methylglyoxal synthase family.

It carries out the reaction dihydroxyacetone phosphate = methylglyoxal + phosphate. In terms of biological role, catalyzes the formation of methylglyoxal from dihydroxyacetone phosphate. This chain is Methylglyoxal synthase, found in Pseudoalteromonas translucida (strain TAC 125).